A 310-amino-acid polypeptide reads, in one-letter code: Ornithine carbamoyltransferase (310 aa).

Carbamoyl phosphate contacts are provided by residues 57–60 (STRT), Gln84, Arg108, and 135–138 (HPCQ). Residues Asn166, Asp229, and 233 to 234 (SM) each bind L-ornithine. Residues 269–270 (CL) and Arg297 contribute to the carbamoyl phosphate site.

Belongs to the aspartate/ornithine carbamoyltransferase superfamily. OTCase family.

The protein resides in the cytoplasm. It catalyses the reaction carbamoyl phosphate + L-ornithine = L-citrulline + phosphate + H(+). It functions in the pathway amino-acid biosynthesis; L-arginine biosynthesis; L-arginine from L-ornithine and carbamoyl phosphate: step 1/3. Reversibly catalyzes the transfer of the carbamoyl group from carbamoyl phosphate (CP) to the N(epsilon) atom of ornithine (ORN) to produce L-citrulline. The protein is Ornithine carbamoyltransferase of Thermosynechococcus vestitus (strain NIES-2133 / IAM M-273 / BP-1).